The following is a 1213-amino-acid chain: DNA-directed RNA polymerase subunit beta' (1213 aa).

4 residues coordinate Zn(2+): Cys60, Cys62, Cys75, and Cys78. Residues Asp450, Asp452, and Asp454 each coordinate Mg(2+). Zn(2+)-binding residues include Cys819, Cys893, Cys900, and Cys903.

Belongs to the RNA polymerase beta' chain family. In terms of assembly, the RNAP catalytic core consists of 2 alpha, 1 beta, 1 beta' and 1 omega subunit. When a sigma factor is associated with the core the holoenzyme is formed, which can initiate transcription. The cofactor is Mg(2+). Zn(2+) serves as cofactor.

The catalysed reaction is RNA(n) + a ribonucleoside 5'-triphosphate = RNA(n+1) + diphosphate. Its function is as follows. DNA-dependent RNA polymerase catalyzes the transcription of DNA into RNA using the four ribonucleoside triphosphates as substrates. The protein is DNA-directed RNA polymerase subunit beta' of Streptococcus pyogenes serotype M6 (strain ATCC BAA-946 / MGAS10394).